We begin with the raw amino-acid sequence, 115 residues long: Tyrosine-protein phosphatase 23 (115 aa).

The region spanning 1–115 (WMMIVEQKCR…EIGGDAPMVV (115 aa)) is the Tyrosine-protein phosphatase domain. Asp83 is a binding site for substrate.

This sequence belongs to the protein-tyrosine phosphatase family.

The catalysed reaction is O-phospho-L-tyrosyl-[protein] + H2O = L-tyrosyl-[protein] + phosphate. This Styela plicata (Wrinkled sea squirt) protein is Tyrosine-protein phosphatase 23 (STY-23).